The primary structure comprises 440 residues: Glycerophosphocholine cholinephosphodiesterase ENPP6 (440 aa).

A signal peptide spans methionine 1–alanine 22. Positions 32, 71, and 92 each coordinate substrate. Aspartate 32 and serine 71 together coordinate Zn(2+). The active-site Nucleophile is serine 71. Serine 71 is modified (phosphoserine). Residues asparagine 100 and asparagine 118 are each glycosylated (N-linked (GlcNAc...) asparagine). Residues cysteine 142 and cysteine 154 are joined by a disulfide bond. Substrate is bound at residue aspartate 193. 4 residues coordinate Zn(2+): aspartate 193, histidine 197, aspartate 240, and histidine 241. Residue histidine 241 participates in substrate binding. N-linked (GlcNAc...) asparagine glycosylation is present at asparagine 341. Position 354 (histidine 354) interacts with substrate. Histidine 354 contributes to the Zn(2+) binding site. N-linked (GlcNAc...) asparagine glycosylation occurs at asparagine 404. A lipid anchor (GPI-anchor amidated serine) is attached at serine 419. A propeptide spans serine 420 to valine 440 (removed in mature form).

This sequence belongs to the nucleotide pyrophosphatase/phosphodiesterase family. In terms of assembly, homodimer; disulfide-linked. Homotetramer. The cofactor is Zn(2+).

It localises to the cell membrane. The enzyme catalyses sn-glycerol 3-phosphocholine + H2O = phosphocholine + glycerol + H(+). It carries out the reaction a 1-acyl-sn-glycero-3-phosphocholine + H2O = a 1-acyl-sn-glycerol + phosphocholine + H(+). The catalysed reaction is a 1-O-alkyl-sn-glycero-3-phosphocholine + H2O = a 1-O-alkyl-sn-glycerol + phosphocholine + H(+). It catalyses the reaction 1-dodecanoyl-sn-glycero-3-phosphocholine + H2O = 1-dodecanoyl-sn-glycerol + phosphocholine + H(+). The enzyme catalyses 1-hexadecanoyl-sn-glycero-3-phosphocholine + H2O = 1-hexadecanoyl-sn-glycerol + phosphocholine + H(+). It carries out the reaction 1-(5Z,8Z,11Z,14Z-eicosatetraenoyl)-sn-glycero-3-phosphocholine + H2O = 1-(5Z,8Z,11Z,14Z-eicosatetraenoyl)-sn-glycerol + phosphocholine + H(+). The catalysed reaction is 1-tetradecanoyl-sn-glycero-3-phosphocholine + H2O = 1-tetradecanoyl-sn-glycerol + phosphocholine + H(+). It catalyses the reaction sphing-4-enine-phosphocholine + H2O = sphing-4-enine + phosphocholine + H(+). The enzyme catalyses 1-(9Z-octadecenoyl)-sn-glycero-3-phosphocholine + H2O = 1-(9Z-octadecenoyl)-sn-glycerol + phosphocholine + H(+). It carries out the reaction 1-(9Z,12Z)-octadecadienoyl-sn-glycero-3-phosphocholine + H2O = 1-(9Z,12Z-octadecadienoyl)-sn-glycerol + phosphocholine + H(+). The catalysed reaction is glycero-2-phosphocholine + H2O = phosphocholine + glycerol + H(+). With respect to regulation, inhibited by EDTA and EGTA in vitro. Functionally, choline-specific glycerophosphodiesterase that hydrolyzes glycerophosphocholine (GPC) and lysophosphatidylcholine (LPC) and contributes to supplying choline to the cells. Has a preference for LPC with short (12:0 and 14:0) or polyunsaturated (18:2 and 20:4) fatty acids. In vitro, hydrolyzes only choline-containing lysophospholipids, such as sphingosylphosphorylcholine (SPC), platelet-activating factor (PAF) and lysoPAF, but not other lysophospholipids. The chain is Glycerophosphocholine cholinephosphodiesterase ENPP6 from Rattus norvegicus (Rat).